A 250-amino-acid polypeptide reads, in one-letter code: MLLAIDVGNTNTVVGVFEGEHLADSWRVRTDPQATADELVLLYRGLLGEYQVTGVSICSTVPAALRALRRMVVRAFHDIPVVIVEPGTRTGVPILIDNPKEAGADRIMNTLAAHHLYGGPAIVVDFGTSTNLDIVSARGEFIGGIFAPGIEIALDALASRAAQLRKVELVAPRSVIGKSTVEALQSGMIYGVAGQVDGLVRRIRAELDTDAVAIATGGLASVVIKESETLDRHEPHLTLIGLRLVFEKNI.

6 to 13 serves as a coordination point for ATP; sequence DVGNTNTV. Position 103-106 (103-106) interacts with substrate; the sequence is GADR. Asp-105 functions as the Proton acceptor in the catalytic mechanism. Asp-125 lines the K(+) pocket. Thr-128 contributes to the ATP binding site. Thr-180 is a substrate binding site.

The protein belongs to the type III pantothenate kinase family. As to quaternary structure, homodimer. The cofactor is NH4(+). K(+) is required as a cofactor.

Its subcellular location is the cytoplasm. It carries out the reaction (R)-pantothenate + ATP = (R)-4'-phosphopantothenate + ADP + H(+). It participates in cofactor biosynthesis; coenzyme A biosynthesis; CoA from (R)-pantothenate: step 1/5. In terms of biological role, catalyzes the phosphorylation of pantothenate (Pan), the first step in CoA biosynthesis. The sequence is that of Type III pantothenate kinase from Frankia casuarinae (strain DSM 45818 / CECT 9043 / HFP020203 / CcI3).